Reading from the N-terminus, the 160-residue chain is Endoribonuclease YbeY (160 aa).

Positions 125, 129, and 135 each coordinate Zn(2+).

It belongs to the endoribonuclease YbeY family. It depends on Zn(2+) as a cofactor.

Its subcellular location is the cytoplasm. Single strand-specific metallo-endoribonuclease involved in late-stage 70S ribosome quality control and in maturation of the 3' terminus of the 16S rRNA. This Leuconostoc mesenteroides subsp. mesenteroides (strain ATCC 8293 / DSM 20343 / BCRC 11652 / CCM 1803 / JCM 6124 / NCDO 523 / NBRC 100496 / NCIMB 8023 / NCTC 12954 / NRRL B-1118 / 37Y) protein is Endoribonuclease YbeY.